The following is a 189-amino-acid chain: Peptidyl-tRNA hydrolase (189 aa).

Residue Tyr14 coordinates tRNA. The active-site Proton acceptor is His19. Positions 64, 66, and 112 each coordinate tRNA.

The protein belongs to the PTH family. In terms of assembly, monomer.

It localises to the cytoplasm. The enzyme catalyses an N-acyl-L-alpha-aminoacyl-tRNA + H2O = an N-acyl-L-amino acid + a tRNA + H(+). Hydrolyzes ribosome-free peptidyl-tRNAs (with 1 or more amino acids incorporated), which drop off the ribosome during protein synthesis, or as a result of ribosome stalling. In terms of biological role, catalyzes the release of premature peptidyl moieties from peptidyl-tRNA molecules trapped in stalled 50S ribosomal subunits, and thus maintains levels of free tRNAs and 50S ribosomes. The polypeptide is Peptidyl-tRNA hydrolase (Rhizorhabdus wittichii (strain DSM 6014 / CCUG 31198 / JCM 15750 / NBRC 105917 / EY 4224 / RW1) (Sphingomonas wittichii)).